Consider the following 269-residue polypeptide: Shikimate dehydrogenase (NADP(+)) (269 aa).

Residues 17–19 (SKS) and threonine 64 contribute to the shikimate site. The active-site Proton acceptor is lysine 68. Glutamate 80 provides a ligand contact to NADP(+). Shikimate contacts are provided by asparagine 89 and aspartate 105. NADP(+)-binding positions include 130-134 (GAGGA), 154-159 (NRTRAK), and methionine 213. Tyrosine 215 contacts shikimate. Residue glycine 237 participates in NADP(+) binding.

This sequence belongs to the shikimate dehydrogenase family. In terms of assembly, homodimer.

The enzyme catalyses shikimate + NADP(+) = 3-dehydroshikimate + NADPH + H(+). Its pathway is metabolic intermediate biosynthesis; chorismate biosynthesis; chorismate from D-erythrose 4-phosphate and phosphoenolpyruvate: step 4/7. Functionally, involved in the biosynthesis of the chorismate, which leads to the biosynthesis of aromatic amino acids. Catalyzes the reversible NADPH linked reduction of 3-dehydroshikimate (DHSA) to yield shikimate (SA). The sequence is that of Shikimate dehydrogenase (NADP(+)) from Neisseria lactamica.